We begin with the raw amino-acid sequence, 442 residues long: Septin-8 (442 aa).

The span at 1–16 (MAATDLERVSSAEPEP) shows a compositional bias: basic and acidic residues. The segment at 1 to 23 (MAATDLERVSSAEPEPRSLSLGG) is disordered. Position 2 is an N-acetylalanine (Ala-2). Ser-10 is modified (phosphoserine). The 267-residue stretch at 41–307 (QGFSFNILCV…ELYRRCKLEE (267 aa)) folds into the Septin-type G domain. The tract at residues 51 to 58 (GETGIGKS) is G1 motif. Residues 51–58 (GETGIGKS), Gly-106, 187–195 (KADTISKSE), Gly-241, and Arg-256 contribute to the GTP site. Residues 103–106 (DAVG) are G3 motif. The segment at 186–189 (AKAD) is G4 motif. A coiled-coil region spans residues 322-410 (LQETYEAKRK…RKAAVEALQS (89 aa)). A compositionally biased stretch (basic and acidic residues) spans 377–391 (HQEEKRKVEEKRREL). The interval 377–442 (HQEEKRKVEE…WSSIYSVTIP (66 aa)) is disordered. Polar residues-rich tracts occupy residues 408-420 (LQSQALHATSQQP) and 432-442 (GWSSIYSVTIP).

This sequence belongs to the TRAFAC class TrmE-Era-EngA-EngB-Septin-like GTPase superfamily. Septin GTPase family. As to quaternary structure, septins polymerize into heterooligomeric protein complexes that form filaments, and can associate with cellular membranes, actin filaments and microtubules. GTPase activity is required for filament formation. Interacts with CDK14, SEPTIN4, SEPTIN5 and SEPTIN7. Interacts with VAMP2; the interaction inhibits interaction of VAMP2 with SYP. Interacts with STX1A.

It is found in the cytoplasm. Its subcellular location is the cytoskeleton. It localises to the synapse. The protein resides in the cell projection. The protein localises to the axon. It is found in the cytoplasmic vesicle. Its subcellular location is the secretory vesicle. It localises to the synaptic vesicle membrane. The protein resides in the presynapse. In terms of biological role, filament-forming cytoskeletal GTPase. May play a role in platelet secretion. Seems to participate in the process of SNARE complex formation in synaptic vesicles. The chain is Septin-8 from Otolemur garnettii (Small-eared galago).